An 871-amino-acid chain; its full sequence is Zinc finger and BTB domain-containing protein 10 (871 aa).

2 disordered regions span residues 1 to 156 (MSFS…FNGR) and 177 to 228 (GASL…AGEG). The segment covering 14-26 (RGGGLVTASGGGS) has biased composition (gly residues). Residues 27 to 37 (TNNNAGGEASA) are compositionally biased toward low complexity. Pro residues predominate over residues 39–56 (PPQPQPRQPPPPAPPALQ). The span at 65–76 (EEVELEGLEPQD) shows a compositional bias: acidic residues. The span at 77–103 (LEASAGPAAGAAEEAKELLLPQDAGGP) shows a compositional bias: low complexity. Arg126 bears the Omega-N-methylarginine mark. The segment covering 126 to 135 (RGGGGGGLGN) has biased composition (gly residues). A Phosphoserine modification is found at Ser210. A Glycyl lysine isopeptide (Lys-Gly) (interchain with G-Cter in SUMO2) cross-link involves residue Lys245. The 70-residue stretch at 364–433 (CDVSIVVSGK…LYSGNLVLTS (70 aa)) folds into the BTB domain. Residues Lys468, Lys483, and Lys497 each participate in a glycyl lysine isopeptide (Lys-Gly) (interchain with G-Cter in SUMO2) cross-link. At Ser565 the chain carries Phosphoserine. Glycyl lysine isopeptide (Lys-Gly) (interchain with G-Cter in SUMO2) cross-links involve residues Lys573, Lys672, Lys684, Lys696, and Lys706. C2H2-type zinc fingers lie at residues 722–744 (LKCP…LLIH) and 750–772 (FSCD…SLVH). Positions 812-871 (SQPGGQEGVDQGQDTEFPRDEEYEENEVGEADEELVDDGEDQNDPSRWDESGEVCMSLDD) are disordered. The segment covering 830-854 (RDEEYEENEVGEADEELVDDGEDQN) has biased composition (acidic residues).

The protein localises to the nucleus. May be involved in transcriptional regulation. In Homo sapiens (Human), this protein is Zinc finger and BTB domain-containing protein 10 (ZBTB10).